The chain runs to 488 residues: 3-octaprenyl-4-hydroxybenzoate carboxy-lyase (488 aa).

A Mn(2+)-binding site is contributed by N172. Prenylated FMN is bound by residues 175–177 (IYR), 189–191 (RWL), and 194–195 (RG). E238 serves as a coordination point for Mn(2+). D287 acts as the Proton donor in catalysis.

It belongs to the UbiD family. As to quaternary structure, homohexamer. Prenylated FMN is required as a cofactor. The cofactor is Mn(2+).

It localises to the cell membrane. The catalysed reaction is a 4-hydroxy-3-(all-trans-polyprenyl)benzoate + H(+) = a 2-(all-trans-polyprenyl)phenol + CO2. It participates in cofactor biosynthesis; ubiquinone biosynthesis. Catalyzes the decarboxylation of 3-octaprenyl-4-hydroxy benzoate to 2-octaprenylphenol, an intermediate step in ubiquinone biosynthesis. In Alkalilimnicola ehrlichii (strain ATCC BAA-1101 / DSM 17681 / MLHE-1), this protein is 3-octaprenyl-4-hydroxybenzoate carboxy-lyase.